The sequence spans 180 residues: Acireductone dioxygenase (180 aa).

Fe(2+)-binding residues include His99, His101, Glu105, and His145. Ni(2+)-binding residues include His99, His101, Glu105, and His145.

This sequence belongs to the acireductone dioxygenase (ARD) family. In terms of assembly, monomer. Requires Fe(2+) as cofactor. It depends on Ni(2+) as a cofactor.

It carries out the reaction 1,2-dihydroxy-5-(methylsulfanyl)pent-1-en-3-one + O2 = 3-(methylsulfanyl)propanoate + CO + formate + 2 H(+). The catalysed reaction is 1,2-dihydroxy-5-(methylsulfanyl)pent-1-en-3-one + O2 = 4-methylsulfanyl-2-oxobutanoate + formate + 2 H(+). It functions in the pathway amino-acid biosynthesis; L-methionine biosynthesis via salvage pathway; L-methionine from S-methyl-5-thio-alpha-D-ribose 1-phosphate: step 5/6. Its function is as follows. Catalyzes 2 different reactions between oxygen and the acireductone 1,2-dihydroxy-3-keto-5-methylthiopentene (DHK-MTPene) depending upon the metal bound in the active site. Fe-containing acireductone dioxygenase (Fe-ARD) produces formate and 2-keto-4-methylthiobutyrate (KMTB), the alpha-ketoacid precursor of methionine in the methionine recycle pathway. Ni-containing acireductone dioxygenase (Ni-ARD) produces methylthiopropionate, carbon monoxide and formate, and does not lie on the methionine recycle pathway. In Geobacillus thermodenitrificans (strain NG80-2), this protein is Acireductone dioxygenase.